A 205-amino-acid polypeptide reads, in one-letter code: Probable GTP-binding protein EngB (205 aa).

Positions 22–196 constitute an EngB-type G domain; sequence NLPEVAFVGR…LKVLDEFIHK (175 aa). GTP is bound by residues 30-37, 57-61, 76-79, 143-146, and 175-177; these read GRSNVGKS, GRTQL, DLPG, TKVD, and FSA. Positions 37 and 59 each coordinate Mg(2+).

The protein belongs to the TRAFAC class TrmE-Era-EngA-EngB-Septin-like GTPase superfamily. EngB GTPase family. Mg(2+) is required as a cofactor.

Necessary for normal cell division and for the maintenance of normal septation. This Desulforamulus reducens (strain ATCC BAA-1160 / DSM 100696 / MI-1) (Desulfotomaculum reducens) protein is Probable GTP-binding protein EngB.